Consider the following 359-residue polypeptide: ATP-dependent (S)-NAD(P)H-hydrate dehydratase (359 aa).

Residues 61-350 (LLEEARKVVP…SEINSVFVNN (290 aa)) form the YjeF C-terminal domain. Residues G161 and 214 to 220 (NVVEFQR) each bind (6S)-NADPHX. ATP is bound by residues 256-260 (KGEVD) and 275-284 (GSPRRCGGQG). Position 285 (D285) interacts with (6S)-NADPHX.

Belongs to the NnrD/CARKD family. The cofactor is Mg(2+).

The enzyme catalyses (6S)-NADHX + ATP = ADP + phosphate + NADH + H(+). It carries out the reaction (6S)-NADPHX + ATP = ADP + phosphate + NADPH + H(+). Functionally, catalyzes the dehydration of the S-form of NAD(P)HX at the expense of ATP, which is converted to ADP. Together with NAD(P)HX epimerase, which catalyzes the epimerization of the S- and R-forms, the enzyme allows the repair of both epimers of NAD(P)HX, a damaged form of NAD(P)H that is a result of enzymatic or heat-dependent hydration. The chain is ATP-dependent (S)-NAD(P)H-hydrate dehydratase from Ciona intestinalis (Transparent sea squirt).